The chain runs to 78 residues: RNA-binding protein KhpA (78 aa).

Positions 29-78 (TIIYELTVAKGDIGKIIGKEGRTIKAIRTLLVSVASRDNVKVSLEIMEER) constitute a KH domain.

This sequence belongs to the KhpA RNA-binding protein family.

The protein resides in the cytoplasm. In terms of biological role, a probable RNA-binding protein. This chain is RNA-binding protein KhpA, found in Chlamydia trachomatis serovar D (strain ATCC VR-885 / DSM 19411 / UW-3/Cx).